The chain runs to 483 residues: Glutamyl-tRNA(Gln) amidotransferase subunit A (483 aa).

Catalysis depends on charge relay system residues Lys-76 and Ser-151. Residue Ser-175 is the Acyl-ester intermediate of the active site.

This sequence belongs to the amidase family. GatA subfamily. In terms of assembly, heterotrimer of A, B and C subunits.

It catalyses the reaction L-glutamyl-tRNA(Gln) + L-glutamine + ATP + H2O = L-glutaminyl-tRNA(Gln) + L-glutamate + ADP + phosphate + H(+). In terms of biological role, allows the formation of correctly charged Gln-tRNA(Gln) through the transamidation of misacylated Glu-tRNA(Gln) in organisms which lack glutaminyl-tRNA synthetase. The reaction takes place in the presence of glutamine and ATP through an activated gamma-phospho-Glu-tRNA(Gln). The sequence is that of Glutamyl-tRNA(Gln) amidotransferase subunit A from Pseudomonas syringae pv. tomato (strain ATCC BAA-871 / DC3000).